The sequence spans 333 residues: Transcription initiation factor IIB (333 aa).

A TFIIB-type zinc finger spans residues 33 to 64; that stretch reads EVYRCPICGNDKFIYNYERGEVVCIVCGAVVQ. The Zn(2+) site is built by Cys37, Cys40, Cys56, and Cys59. 2 tandem repeats follow at residues 149–232 and 243–324.

It belongs to the TFIIB family.

In terms of biological role, stabilizes TBP binding to an archaeal box-A promoter. Also responsible for recruiting RNA polymerase II to the pre-initiation complex (DNA-TBP-TFIIB). This chain is Transcription initiation factor IIB, found in Pyrobaculum neutrophilum (strain DSM 2338 / JCM 9278 / NBRC 100436 / V24Sta) (Thermoproteus neutrophilus).